Consider the following 906-residue polypeptide: Ankyrin repeat and MYND domain-containing protein 1 (906 aa).

3 MORN repeats span residues tyrosine 16–serine 38, phenylalanine 39–methionine 59, and phenylalanine 61–glutamine 83. The stretch at lysine 282 to lysine 311 is one ANK 1 repeat. A compositionally biased stretch (polar residues) spans serine 391–methionine 400. Positions serine 391–threonine 411 are disordered. ANK repeat units lie at residues valine 479 to leucine 508, valine 511 to isoleucine 540, glutamine 547 to alanine 579, glycine 623 to valine 657, serine 660 to leucine 689, and valine 701 to asparagine 732. The Zn(2+) site is built by cysteine 845, cysteine 848, cysteine 859, cysteine 862, cysteine 868, cysteine 872, histidine 881, and cysteine 885. The MYND-type zinc-finger motif lies at cysteine 845–cysteine 885.

This is Ankyrin repeat and MYND domain-containing protein 1 (Ankmy1) from Mus musculus (Mouse).